Here is a 172-residue protein sequence, read N- to C-terminus: NADH-ubiquinone oxidoreductase chain 6 (172 aa).

The next 6 membrane-spanning stretches (helical) occupy residues Met-1–Leu-21, Pro-25–Tyr-45, Gly-48–Val-68, Val-86–Asn-106, Phe-108–Ala-128, and Leu-141–Val-161.

It belongs to the complex I subunit 6 family.

The protein localises to the mitochondrion membrane. The enzyme catalyses a ubiquinone + NADH + 5 H(+)(in) = a ubiquinol + NAD(+) + 4 H(+)(out). Its function is as follows. Core subunit of the mitochondrial membrane respiratory chain NADH dehydrogenase (Complex I) that is believed to belong to the minimal assembly required for catalysis. Complex I functions in the transfer of electrons from NADH to the respiratory chain. The immediate electron acceptor for the enzyme is believed to be ubiquinone. In Petromyzon marinus (Sea lamprey), this protein is NADH-ubiquinone oxidoreductase chain 6 (MT-ND6).